The chain runs to 649 residues: PH and SEC7 domain-containing protein 1 (649 aa).

Disordered stretches follow at residues 1-22 (MPHS…PSAD) and 57-161 (PGPT…LDST). Over residues 70 to 88 (PPQPPAPRPDPPAPAPLAP) the composition is skewed to pro residues. Basic and acidic residues predominate over residues 120–132 (PRKELPSPSHSED). One can recognise an SEC7 domain in the interval 137-331 (GAAPLGSEPP…KALYSSIKNE (195 aa)). Position 345 is a phosphoserine (S345). A PH domain is found at 381–494 (AVYKHGALVR…WITRINVVAA (114 aa)). Coiled coils occupy residues 523 to 549 (LSQE…HRAA) and 581 to 608 (AALL…AGST). A disordered region spans residues 601–649 (ALAQAGSTEEGCPPPHSSPSLQPNPTSQPRAQRPGSEARAGAGSTRPKP). A compositionally biased stretch (polar residues) spans 618-630 (SPSLQPNPTSQPR).

This sequence belongs to the PSD family. As to quaternary structure, interacts with ACTN1. Interacts (ARF6-bound form) with KCNK1; does not interact with KCNK1 in the absence of ARF6. As to expression, brain. Expressed in the hippocampal and dentate neuronal layers, cerebellar cortex, molecular layer of the hippocampus and dentate gyrus.

It localises to the cell membrane. The protein resides in the cell projection. The protein localises to the ruffle membrane. It is found in the cleavage furrow. In terms of biological role, guanine nucleotide exchange factor for ARF6. Induces cytoskeletal remodeling. The sequence is that of PH and SEC7 domain-containing protein 1 (Psd) from Rattus norvegicus (Rat).